The primary structure comprises 475 residues: Putative poly(A) polymerase catalytic subunit (475 aa).

It belongs to the poxviridae poly(A) polymerase catalytic subunit family. Highly divergent.

It is found in the virion. The catalysed reaction is RNA(n) + ATP = RNA(n)-3'-adenine ribonucleotide + diphosphate. Its function is as follows. Polymerase that creates the 3'-poly(A) tail of mRNAs. The polypeptide is Putative poly(A) polymerase catalytic subunit (Ornithodoros (relapsing fever ticks)).